The chain runs to 716 residues: Fatty acid oxidation complex subunit alpha (716 aa).

Residues 1-189 are enoyl-CoA hydratase/isomerase; sequence MIYQSPTIQV…KVGAVDAVVA (189 aa). Substrate is bound at residue D296. The 3-hydroxyacyl-CoA dehydrogenase stretch occupies residues 311–716; that stretch reads KDVKSAAVLG…AANNGSYYQA (406 aa). Residues M324, D343, 400–402, K407, and S429 contribute to the NAD(+) site; that span reads VVE. Catalysis depends on H450, which acts as the For 3-hydroxyacyl-CoA dehydrogenase activity. Residue N453 coordinates NAD(+). Residues N500 and Y660 each coordinate substrate.

It in the N-terminal section; belongs to the enoyl-CoA hydratase/isomerase family. This sequence in the C-terminal section; belongs to the 3-hydroxyacyl-CoA dehydrogenase family. As to quaternary structure, heterotetramer of two alpha chains (FadB) and two beta chains (FadA).

The catalysed reaction is a (3S)-3-hydroxyacyl-CoA + NAD(+) = a 3-oxoacyl-CoA + NADH + H(+). It carries out the reaction a (3S)-3-hydroxyacyl-CoA = a (2E)-enoyl-CoA + H2O. The enzyme catalyses a 4-saturated-(3S)-3-hydroxyacyl-CoA = a (3E)-enoyl-CoA + H2O. It catalyses the reaction (3S)-3-hydroxybutanoyl-CoA = (3R)-3-hydroxybutanoyl-CoA. The catalysed reaction is a (3Z)-enoyl-CoA = a 4-saturated (2E)-enoyl-CoA. It carries out the reaction a (3E)-enoyl-CoA = a 4-saturated (2E)-enoyl-CoA. Its pathway is lipid metabolism; fatty acid beta-oxidation. Its function is as follows. Involved in the aerobic and anaerobic degradation of long-chain fatty acids via beta-oxidation cycle. Catalyzes the formation of 3-oxoacyl-CoA from enoyl-CoA via L-3-hydroxyacyl-CoA. It can also use D-3-hydroxyacyl-CoA and cis-3-enoyl-CoA as substrate. This chain is Fatty acid oxidation complex subunit alpha, found in Shewanella sp. (strain ANA-3).